A 615-amino-acid polypeptide reads, in one-letter code: TANK-binding kinase 1-binding protein 1 (615 aa).

The tract at residues 1 to 279 (MESMFEDDIS…QDLASNQSER (279 aa)) is homodimerization. A coiled-coil region spans residues 48-162 (YGDIKERLGG…ALVETHLRQI (115 aa)). Phosphoserine is present on Ser-184. Residues 221 to 276 (VSDLERRRLEEALEAAQGEARGAQLREEQLQAECERLQGELKQLQETRAQDLASNQ) are a coiled coil. The segment at 280-329 (DMAWVKRVGDDQVNLALAYTELTEELGRLRELSSLQGRILRTLLQEQARS) is interaction with TBK1 and IKBKE. The disordered stretch occupies residues 326-458 (QARSGGQRHS…SHHVKAGFQG (133 aa)). Residues 345-365 (PQCPSPSPPARAAPPCPPCQS) are compositionally biased toward pro residues. Phosphoserine occurs at positions 365, 372, 379, 385, 400, and 415. The segment covering 389-406 (PSCPSPVPQRRSPVPPSC) has biased composition (pro residues). The span at 416–435 (PVPPSCPAPQPRPPPPPPPG) shows a compositional bias: pro residues. 2 positions are modified to phosphoserine: Ser-504 and Ser-534. The UBZ1-type zinc-finger motif lies at 583 to 609 (IRSCPLCQLGFPVGYPDDALIKHIDSH). Zn(2+)-binding residues include Cys-586, Cys-589, His-605, and His-609.

Homodimer. May form a heterodimer with NAP1. Interacts with TKB1 and IKBKE. Weakly interacts with DDX3X. As to quaternary structure, (Microbial infection) Interacts with vaccinia virus protein C6. As to expression, detected in leukocytes, lung, placenta, small intestine, liver, kidney, spleen, muscle, heart, brain and at low levels in thymus.

Its function is as follows. Adapter protein which constitutively binds TBK1 and IKBKE playing a role in antiviral innate immunity. The sequence is that of TANK-binding kinase 1-binding protein 1 from Homo sapiens (Human).